The sequence spans 126 residues: L-alanine exporter AlaE (126 aa).

A helical membrane pass occupies residues 23 to 43 (FALVVYCFFTGMAIEILLSGM).

Belongs to the AlaE exporter family.

The protein resides in the cell inner membrane. In terms of biological role, exports L-alanine. The chain is L-alanine exporter AlaE from Sodalis glossinidius (strain morsitans).